A 653-amino-acid chain; its full sequence is Sodium-dependent phosphate transporter 2 (653 aa).

Residues 1–5 (MVLDE) are Extracellular-facing. A helical membrane pass occupies residues 6–26 (YMWMVIVGFIIAFVLAFSVGA). Over 27 to 46 (NDVANSFGTAVGSGVVTLRQ) the chain is Cytoplasmic. The helical transmembrane segment at 47-67 (ACILASIFETIGSVLLGAKVG) threads the bilayer. At 68–86 (ETIRKGIIDVNLYNNTVDL) the chain is on the extracellular side. An N-linked (GlcNAc...) asparagine glycan is attached at asparagine 81. Residues 87-107 (LMAGEVSAMVGSAVWQLIASF) traverse the membrane as a helical segment. Over 108–109 (LK) the chain is Cytoplasmic. Residues 110–130 (LPVSGTHCIVGATIGFSLVAV) traverse the membrane as a helical segment. Over 131–142 (GAHSVQWMQLVK) the chain is Extracellular. Residues 143–163 (IVASWFISPLLSGLMSGALFL) traverse the membrane as a helical segment. At 164 to 187 (MIKFFILNKEDPVPNGLKALPVFY) the chain is on the cytoplasmic side. A helical membrane pass occupies residues 188-208 (AATIGINVFSILFTGAPLLGL). Residues 209–217 (QTFPVWATA) are Extracellular-facing. Residues 218–238 (LLSVGIAIVFALVVWFFVCPW) form a helical membrane-spanning segment. Topologically, residues 239–483 (MKKKIASRLK…EDKEEKDKSQ (245 aa)) are cytoplasmic. The segment at 275–310 (LPGAKGNDESVLPLTSSSPDAAVSSESVSNGNTRVP) is disordered. Low complexity predominate over residues 290–303 (SSSPDAAVSSESVS). A helical transmembrane segment spans residues 484–504 (VHLLFHFLQILTACFGSFAHG). The Extracellular segment spans residues 505-532 (GNDVSNAIGPLVALWLIYQQGGVMQEAS). A helical membrane pass occupies residues 533-553 (TPVWLLLYGGVGICAGLWVWG). Topologically, residues 554–572 (RRVIQTMGKDLTPITPSSG) are cytoplasmic. A helical transmembrane segment spans residues 573–587 (FTIELASAFTVVVAS). Residues 588–594 (NIGLPIS) are Extracellular-facing. Residues 595 to 610 (TTHCKVGSVVAVGWIR) form a helical membrane-spanning segment. Topologically, residues 611 to 622 (SRKAVDWRLFRN) are cytoplasmic. A helical transmembrane segment spans residues 623-643 (IFLAWFVTVPVAGLFSAGVMA). Topologically, residues 644 to 653 (ILQYGILPYV) are extracellular.

Belongs to the inorganic phosphate transporter (PiT) (TC 2.A.20) family. In terms of assembly, homodimer.

It is found in the cell membrane. It localises to the apical cell membrane. The catalysed reaction is 2 Na(+)(out) + phosphate(out) = 2 Na(+)(in) + phosphate(in). Sodium-phosphate symporter which preferentially transports the monovalent form of phosphate with a stoichiometry of two sodium ions per phosphate ion. The protein is Sodium-dependent phosphate transporter 2 (slc20a2) of Xenopus laevis (African clawed frog).